The following is a 475-amino-acid chain: Bifunctional protein HldE (475 aa).

The tract at residues 1–321 (MADKIDISLY…RALHQITASH (321 aa)) is ribokinase. Residue 197-200 (NLKE) coordinates ATP. The active site involves Asp266. The interval 346-475 (MTNGCFDILH…TSRLVEKMLN (130 aa)) is cytidylyltransferase.

In the N-terminal section; belongs to the carbohydrate kinase PfkB family. It in the C-terminal section; belongs to the cytidylyltransferase family. As to quaternary structure, homodimer.

The enzyme catalyses D-glycero-beta-D-manno-heptose 7-phosphate + ATP = D-glycero-beta-D-manno-heptose 1,7-bisphosphate + ADP + H(+). The catalysed reaction is D-glycero-beta-D-manno-heptose 1-phosphate + ATP + H(+) = ADP-D-glycero-beta-D-manno-heptose + diphosphate. It functions in the pathway nucleotide-sugar biosynthesis; ADP-L-glycero-beta-D-manno-heptose biosynthesis; ADP-L-glycero-beta-D-manno-heptose from D-glycero-beta-D-manno-heptose 7-phosphate: step 1/4. The protein operates within nucleotide-sugar biosynthesis; ADP-L-glycero-beta-D-manno-heptose biosynthesis; ADP-L-glycero-beta-D-manno-heptose from D-glycero-beta-D-manno-heptose 7-phosphate: step 3/4. Functionally, catalyzes the phosphorylation of D-glycero-D-manno-heptose 7-phosphate at the C-1 position to selectively form D-glycero-beta-D-manno-heptose-1,7-bisphosphate. In terms of biological role, catalyzes the ADP transfer from ATP to D-glycero-beta-D-manno-heptose 1-phosphate, yielding ADP-D-glycero-beta-D-manno-heptose. The protein is Bifunctional protein HldE of Coxiella burnetii (strain Dugway 5J108-111).